A 116-amino-acid polypeptide reads, in one-letter code: Mercuric transport protein MerT (116 aa).

The next 2 helical transmembrane spans lie at Leu16–Phe36 and Val46–Trp66. Hg(2+)-binding residues include Cys24 and Cys25. Residues Cys76 and Cys82 each contribute to the Hg(2+) site. The helical transmembrane segment at Ile94–Phe114 threads the bilayer.

It belongs to the MerT family.

The protein localises to the cell inner membrane. Involved in mercury resistance. Probably transfers a mercuric ion from the periplasmic Hg(2+)-binding protein MerP to the cytoplasmic mercuric reductase MerA. This chain is Mercuric transport protein MerT, found in Pseudomonas fluorescens.